The primary structure comprises 203 residues: High frequency lysogenization protein HflD homolog (203 aa).

The protein belongs to the HflD family.

It is found in the cytoplasm. It localises to the cell inner membrane. In Pasteurella multocida (strain Pm70), this protein is High frequency lysogenization protein HflD homolog.